We begin with the raw amino-acid sequence, 341 residues long: Flagellar P-ring protein (341 aa).

Positions 1-19 (MKQVFLWLIFVLAFHKLLA) are cleaved as a signal peptide.

The protein belongs to the FlgI family. As to quaternary structure, the basal body constitutes a major portion of the flagellar organelle and consists of four rings (L,P,S, and M) mounted on a central rod.

Its subcellular location is the periplasm. The protein resides in the bacterial flagellum basal body. Functionally, assembles around the rod to form the L-ring and probably protects the motor/basal body from shearing forces during rotation. The protein is Flagellar P-ring protein of Helicobacter acinonychis (strain Sheeba).